The sequence spans 1022 residues: Sodium/potassium-transporting ATPase subunit alpha (1022 aa).

The propeptide occupies 1–5 (MGKGA). A disordered region spans residues 1–34 (MGKGAASEKYQPAATSENAKNSKKSKSKTTDLDE). Residues 6–87 (ASEKYQPAAT…NALTPPPTTP (82 aa)) lie on the Cytoplasmic side of the membrane. Ser-16 is subject to Phosphoserine; by PKC. The interaction with phosphoinositide-3 kinase stretch occupies residues 82 to 84 (PPP). The chain crosses the membrane as a helical span at residues 88 to 108 (EWIKFCRQLFGGFSILLWTGA). Residues 109–131 (ILCFLAYGIQVATVDNPANDNLY) lie on the Lumenal side of the membrane. Residues 132–152 (LGVVLSTVVIITGCFSYYQEA) form a helical membrane-spanning segment. Topologically, residues 153–288 (KSSKIMDSFK…VGQTPIAAEI (136 aa)) are cytoplasmic. The tract at residues 215–235 (NSSLTGESEPQSRSPEYSSEN) is disordered. The chain crosses the membrane as a helical span at residues 289–308 (EHFIHIITGVAVFLGVSFFI). At 309 to 320 (LSLILGYTWLEA) the chain is on the lumenal side. Residues 321–338 (VIFLIGIIVANVPEGLLA) traverse the membrane as a helical segment. Over 339-771 (TVTVCLTLTA…EEGRLIFDNL (433 aa)) the chain is Cytoplasmic. Catalysis depends on Asp-376, which acts as the 4-aspartylphosphate intermediate. Mg(2+) contacts are provided by Asp-716 and Asp-720. The helical transmembrane segment at 772-791 (KKSIAYTLTSNIPEITPFLV) threads the bilayer. Residues 792 to 801 (FIIANVPLPL) are Lumenal-facing. A helical membrane pass occupies residues 802–822 (GTVTILCIDLGTDMVPAISLA). The Cytoplasmic segment spans residues 823 to 842 (YERAESDIMKRQPRNPKTDK). The helical transmembrane segment at 843 to 865 (LVNERLISMAYGQIGMIQALGGF) threads the bilayer. At 866-917 (FSYFVILAENGFLPIDLIGIREKWDELWTQDLEDSYGQQWTYEQRKIVEYTC) the chain is on the lumenal side. Residues 918 to 937 (HTSFFVSIVIVQWADLIICK) traverse the membrane as a helical segment. Residues 938-950 (TRRNSIFQQGMKN) are Cytoplasmic-facing. Ser-942 is modified (phosphoserine; by PKA). A helical transmembrane segment spans residues 951–969 (KILIFGLFEETALAAFLSY). At 970–984 (TPGTDIALRMYPLKP) the chain is on the lumenal side. The helical transmembrane segment at 985–1005 (SWWFCAFPYSLIIFLYDEARR) threads the bilayer. At 1006-1022 (FILRRNPGGWVEQETYY) the chain is on the cytoplasmic side.

This sequence belongs to the cation transport ATPase (P-type) (TC 3.A.3) family. Type IIC subfamily. The sodium/potassium-transporting ATPase is composed of a catalytic alpha subunit, an auxiliary non-catalytic beta subunit and an additional regulatory subunit.

Its subcellular location is the cell membrane. The enzyme catalyses K(+)(out) + Na(+)(in) + ATP + H2O = K(+)(in) + Na(+)(out) + ADP + phosphate + H(+). In terms of biological role, this is the catalytic component of the active enzyme, which catalyzes the hydrolysis of ATP coupled with the exchange of sodium and potassium ions across the plasma membrane. This action creates the electrochemical gradient of sodium and potassium ions, providing the energy for active transport of various nutrients. In Tetronarce californica (Pacific electric ray), this protein is Sodium/potassium-transporting ATPase subunit alpha.